A 439-amino-acid chain; its full sequence is Glutamate-1-semialdehyde 2,1-aminomutase (439 aa).

The residue at position 270 (Lys270) is an N6-(pyridoxal phosphate)lysine.

Belongs to the class-III pyridoxal-phosphate-dependent aminotransferase family. HemL subfamily. As to quaternary structure, homodimer. Pyridoxal 5'-phosphate is required as a cofactor.

Its subcellular location is the cytoplasm. The enzyme catalyses (S)-4-amino-5-oxopentanoate = 5-aminolevulinate. The protein operates within porphyrin-containing compound metabolism; protoporphyrin-IX biosynthesis; 5-aminolevulinate from L-glutamyl-tRNA(Glu): step 2/2. In Kocuria rhizophila (strain ATCC 9341 / DSM 348 / NBRC 103217 / DC2201), this protein is Glutamate-1-semialdehyde 2,1-aminomutase.